The following is a 517-amino-acid chain: ATP synthase subunit alpha 1 (517 aa).

176–183 is an ATP binding site; it reads GDRQTGKT.

It belongs to the ATPase alpha/beta chains family. As to quaternary structure, F-type ATPases have 2 components, CF(1) - the catalytic core - and CF(0) - the membrane proton channel. CF(1) has five subunits: alpha(3), beta(3), gamma(1), delta(1), epsilon(1). CF(0) has three main subunits: a(1), b(2) and c(9-12). The alpha and beta chains form an alternating ring which encloses part of the gamma chain. CF(1) is attached to CF(0) by a central stalk formed by the gamma and epsilon chains, while a peripheral stalk is formed by the delta and b chains.

It localises to the cell inner membrane. The enzyme catalyses ATP + H2O + 4 H(+)(in) = ADP + phosphate + 5 H(+)(out). Its function is as follows. Produces ATP from ADP in the presence of a proton gradient across the membrane. The alpha chain is a regulatory subunit. The protein is ATP synthase subunit alpha 1 of Shewanella frigidimarina (strain NCIMB 400).